We begin with the raw amino-acid sequence, 213 residues long: Gas vesicle protein F1 (213 aa).

The protein belongs to the gas vesicle GvpF/GvpL family. As to quaternary structure, binds GvpA1 in early growth stages; is the only one of GvpF1 to GvpM1 that interacts with GvpA1 in H.volcanii experiments. GvpF to GvpM interact with each other in vitro, and may form multi-subunit complex(es). Interacts with GvpC1 and GvpO1.

It is found in the gas vesicle. The protein localises to the cytoplasm. Its function is as follows. Might be involved in preventing aggregation of GvpA1. Proteins GvpF to GvpM might be involved in nucleating gas vesicle formation. A minor component of the gas vesicle, also found in soluble extracts. Gas vesicles are hollow, gas filled proteinaceous nanostructures found in several microbial planktonic microorganisms. They allow positioning of halobacteria at the optimal depth for growth in the poorly aerated, shallow brine pools of their habitat. Expression of a 9.5 kb p-vac DNA fragment containing 2 divergently transcribed regions (gvpD-gvpE-gvpF-gvpG-gvpH-gvpI-gvpJ-gvpK-gvpL-gvpM and gvpA-gvpC-gvpN-gvpO) allows H.volcanii to produce gas vesicles. A minimal gas vesicle can be made in H.volcanii by gvpA1-gvpO1 plus gvpF1-gvpG1-gvpJ1-gvpK1-gvpL1-gvpM1; lack of enough GvpJ1 prevents formation. The same region restores gas vesicle production in H.halobium without the p-vac locus. This chain is Gas vesicle protein F1 (gvpF11), found in Halobacterium salinarum (strain ATCC 700922 / JCM 11081 / NRC-1) (Halobacterium halobium).